Consider the following 188-residue polypeptide: Peptidyl-tRNA hydrolase (188 aa).

Tyr-15 is a binding site for tRNA. His-20 functions as the Proton acceptor in the catalytic mechanism. TRNA is bound by residues Tyr-64, Asn-66, and Asn-112.

Belongs to the PTH family. As to quaternary structure, monomer.

The protein resides in the cytoplasm. The catalysed reaction is an N-acyl-L-alpha-aminoacyl-tRNA + H2O = an N-acyl-L-amino acid + a tRNA + H(+). Hydrolyzes ribosome-free peptidyl-tRNAs (with 1 or more amino acids incorporated), which drop off the ribosome during protein synthesis, or as a result of ribosome stalling. Its function is as follows. Catalyzes the release of premature peptidyl moieties from peptidyl-tRNA molecules trapped in stalled 50S ribosomal subunits, and thus maintains levels of free tRNAs and 50S ribosomes. This Cytophaga hutchinsonii (strain ATCC 33406 / DSM 1761 / CIP 103989 / NBRC 15051 / NCIMB 9469 / D465) protein is Peptidyl-tRNA hydrolase.